A 503-amino-acid polypeptide reads, in one-letter code: Activin receptor type-1-like (503 aa).

A signal peptide spans 1–21; the sequence is MTLGSPRRGLLMLLMALVTQG. Residues 22–118 are Extracellular-facing; that stretch reads DPVKPSRGPL…PSEQPGTDGQ (97 aa). 3 cysteine pairs are disulfide-bonded: Cys34–Cys51, Cys36–Cys41, and Cys46–Cys69. A mediates specificity for BMP ligand region spans residues 73–76; sequence HREL. Intrachain disulfides connect Cys77-Cys89 and Cys90-Cys95. Asn98 carries an N-linked (GlcNAc...) asparagine glycan. A helical membrane pass occupies residues 119–141; it reads LALILGPVLALLALVALGVLGLW. At 142-503 the chain is on the cytoplasmic side; that stretch reads HVRRRQEKQR…NSPEKPKVIQ (362 aa). Ser155, Ser160, and Ser161 each carry phosphoserine. In terms of domain architecture, GS spans 172 to 201; the sequence is SMLGDLLDSDCTTGSGSGLPFLVQRTVARQ. The Protein kinase domain maps to 202–492; that stretch reads VALVECVGKG…LRIKKTLQKI (291 aa). Residues 208–216 and Lys229 each bind ATP; that span reads VGKGRYGEV. The active-site Proton acceptor is the Asp330.

It belongs to the protein kinase superfamily. TKL Ser/Thr protein kinase family. TGFB receptor subfamily. Interacts with TSC22D1/TSC-22. Requires Mg(2+) as cofactor. Mn(2+) is required as a cofactor.

Its subcellular location is the cell membrane. It catalyses the reaction L-threonyl-[receptor-protein] + ATP = O-phospho-L-threonyl-[receptor-protein] + ADP + H(+). The catalysed reaction is L-seryl-[receptor-protein] + ATP = O-phospho-L-seryl-[receptor-protein] + ADP + H(+). Functionally, type I receptor for TGF-beta family ligands BMP9/GDF2 and BMP10 and important regulator of normal blood vessel development. On ligand binding, forms a receptor complex consisting of two type II and two type I transmembrane serine/threonine kinases. Type II receptors phosphorylate and activate type I receptors which autophosphorylate, then bind and activate SMAD transcriptional regulators. May bind activin as well. This is Activin receptor type-1-like (ACVRL1) from Pongo abelii (Sumatran orangutan).